We begin with the raw amino-acid sequence, 512 residues long: GMP synthase [glutamine-hydrolyzing] (512 aa).

The Glutamine amidotransferase type-1 domain maps to 7–197 (TIIVLDFGSQ…VFGVCGCSEG (191 aa)). Catalysis depends on cysteine 84, which acts as the Nucleophile. Active-site residues include histidine 171 and glutamate 173. The GMPS ATP-PPase domain occupies 198–387 (WNMENFIEVE…LGIPDEIVWR (190 aa)). Position 225-231 (225-231 (SGGVDSS)) interacts with ATP.

Homodimer.

The catalysed reaction is XMP + L-glutamine + ATP + H2O = GMP + L-glutamate + AMP + diphosphate + 2 H(+). The protein operates within purine metabolism; GMP biosynthesis; GMP from XMP (L-Gln route): step 1/1. Catalyzes the synthesis of GMP from XMP. The polypeptide is GMP synthase [glutamine-hydrolyzing] (Bacillus cereus (strain G9842)).